A 627-amino-acid chain; its full sequence is Spindle assembly abnormal protein 6 homolog (627 aa).

A PISA domain is found at 39–91 (VHRKDLVVRLTDDTDLYFLYNLIISEEDFQSLKVQQGLLIDFTSFPQKFIDLL). Residues 153-473 (LASCLSSVKE…SREVLKTNEN (321 aa)) are a coiled coil. Disordered stretches follow at residues 187-257 (QTLS…LQTK) and 561-586 (EVSP…SKYF). The span at 191 to 201 (EKSRELDKLRS) shows a compositional bias: basic and acidic residues. Polar residues predominate over residues 202-213 (EWTSQTTSLSSR). The span at 214-226 (HMQDLTAEREKAL) shows a compositional bias: basic and acidic residues. Low complexity predominate over residues 229 to 238 (QSRLQQQNEQ).

As to quaternary structure, nine homodimers form a cartwheel structure with an internal diameter of 23 nM and radial spokes connecting to the microtubule triplets.

Its subcellular location is the cytoplasm. It is found in the cytoskeleton. The protein localises to the microtubule organizing center. It localises to the centrosome. Functionally, central scaffolding component of the centrioles ensuring their 9-fold symmetry. Required for centrosome biogenesis and duplication: required both for mother-centriole-dependent centriole duplication and deuterosome-dependent centriole amplification in multiciliated cells. This is Spindle assembly abnormal protein 6 homolog (sass6) from Danio rerio (Zebrafish).